The primary structure comprises 337 residues: MLDSRARLLLKALVERYIADGQPVGSRTLSKASGLELSPATIRNVMSDLEDLGLIVSPHTSAGRIPTARGYRLFVDTMLTTQRDPFSVAGQMARIAPDQPLKVISNAAHMLSSLSQFVGVVMAPRRTSVFRHIEFLRLSEKRFLVIIVSPDGDVQNRVIFTETDYTASQLIEASNFLNSHYAGMAIEEVRERLKNEVEALRGEIATLMQEAVLVSSEAIESRDEVVVSGERNLLAVSDFSSDMGNLRKLFDLFEQKAQLMRLLDVSSRAEGVRIYIGGESQVIPYQELSVVTAPYEVDGQVVGTLGVIGPMRMPYEKMIQIVDITSKLVSTALSHSK.

This sequence belongs to the HrcA family.

Its function is as follows. Negative regulator of class I heat shock genes (grpE-dnaK-dnaJ and groELS operons). Prevents heat-shock induction of these operons. This Polaromonas naphthalenivorans (strain CJ2) protein is Heat-inducible transcription repressor HrcA.